An 88-amino-acid polypeptide reads, in one-letter code: Large ribosomal subunit protein bL31 (88 aa).

The segment at 67–88 (MGSVDNATSEKKSATDETSKES) is disordered. The span at 74–88 (TSEKKSATDETSKES) shows a compositional bias: basic and acidic residues.

Belongs to the bacterial ribosomal protein bL31 family. Type A subfamily. Part of the 50S ribosomal subunit.

Functionally, binds the 23S rRNA. This chain is Large ribosomal subunit protein bL31, found in Synechococcus sp. (strain CC9311).